We begin with the raw amino-acid sequence, 310 residues long: MSENRIRIATRKSPLAMWQAEFVKAELERIHPGIVVELLPMSTKGDVILDTPLAKVGGKGLFVKELEVAMLEDQADIAVHSMKDVPVDFPEGLGLEVICEREDPRDAFVSNIYKSISELPLGATVGTSSLRRQCQLRASRPDLIIKDLRGNVGTRLAKLDNGEYDAIILAAAGLIRLKLSERIASFISAEESLPANGQGAVGIECRTNDERVKALLAPLEHLETRYRVIAERAMNTRLEGGCQVPIGAFAEIDGDEMTLRGLVGNPDGSEIIEGVITGPKTEATQLGVALAEELLSKGAKSILDAVYAKA.

Cys-242 is subject to S-(dipyrrolylmethanemethyl)cysteine.

Belongs to the HMBS family. In terms of assembly, monomer. It depends on dipyrromethane as a cofactor.

It catalyses the reaction 4 porphobilinogen + H2O = hydroxymethylbilane + 4 NH4(+). It participates in porphyrin-containing compound metabolism; protoporphyrin-IX biosynthesis; coproporphyrinogen-III from 5-aminolevulinate: step 2/4. Tetrapolymerization of the monopyrrole PBG into the hydroxymethylbilane pre-uroporphyrinogen in several discrete steps. The protein is Porphobilinogen deaminase of Shewanella oneidensis (strain ATCC 700550 / JCM 31522 / CIP 106686 / LMG 19005 / NCIMB 14063 / MR-1).